The chain runs to 72 residues: Protein SlyX homolog (72 aa).

Belongs to the SlyX family.

This is Protein SlyX homolog from Bradyrhizobium diazoefficiens (strain JCM 10833 / BCRC 13528 / IAM 13628 / NBRC 14792 / USDA 110).